The chain runs to 150 residues: Large ribosomal subunit protein uL15 (150 aa).

The segment at 1-57 (MRLEDIRPQAGSTRRRRRLGRGVSAGQGASCGKGMRGQKARKGGSTRPGFEGGQTPL) is disordered. Gly residues predominate over residues 23–35 (VSAGQGASCGKGM).

Belongs to the universal ribosomal protein uL15 family. In terms of assembly, part of the 50S ribosomal subunit.

In terms of biological role, binds to the 23S rRNA. In Synechococcus sp. (strain JA-2-3B'a(2-13)) (Cyanobacteria bacterium Yellowstone B-Prime), this protein is Large ribosomal subunit protein uL15.